The chain runs to 185 residues: Ribonuclease HII (185 aa).

The region spanning 1–185 (MIILGIDEAG…KSYKPIQLLL (185 aa)) is the RNase H type-2 domain. A divalent metal cation contacts are provided by D7, E8, and D99.

Belongs to the RNase HII family. The cofactor is Mn(2+). Mg(2+) serves as cofactor.

The protein localises to the cytoplasm. It catalyses the reaction Endonucleolytic cleavage to 5'-phosphomonoester.. In terms of biological role, endonuclease that specifically degrades the RNA of RNA-DNA hybrids. The chain is Ribonuclease HII from Francisella philomiragia subsp. philomiragia (strain ATCC 25017 / CCUG 19701 / FSC 153 / O#319-036).